The following is a 316-amino-acid chain: Phosducin-like protein 1 (316 aa).

The interval 1–61 is disordered; that stretch reads MEQNILNSIL…EDGDKEYEVD (61 aa). Basic and acidic residues predominate over residues 12-41; that stretch reads KFGDGDQERSDIRHNDSGDENDNHSDHEGN. Positions 49–61 are enriched in acidic residues; it reads EGNEDGDKEYEVD. In terms of domain architecture, Phosducin spans 95–290; it reads SDYAEHREKQ…LLSSYDIIPN (196 aa). Residues 102 to 156 adopt a coiled-coil conformation; that stretch reads EKQKQKYLQKKYETQKMLEKMCFTTRDQPPPTEEENQLDSDDDDLERIRKARMEQ. The tract at residues 175–316 is thioredoxin fold; sequence FGYFKQIDSS…RPESDDDNDD (142 aa). Positions 293–316 are disordered; sequence KAKNSNWETSLSRKRPESDDDNDD.

This sequence belongs to the phosducin family.

It localises to the cytoplasm. Functionally, required for normal chemotaxis in response to cAMP and folate. Required for the heterodimerization of the G protein beta and gamma subunits gpbA and gpgA, which is itself thought to be necessary for prenylation of the gamma subunit gpgA and its association with plasma membranes. The protein is Phosducin-like protein 1 (phlp1) of Dictyostelium discoideum (Social amoeba).